Consider the following 893-residue polypeptide: ATPase family gene 2 protein homolog A (893 aa).

Positions 1 to 10 (MSSKKNRKRL) are enriched in basic residues. Residues 1–26 (MSSKKNRKRLNQSAENGSSLPSAASS) form a disordered region. Residues 1-237 (MSSKKNRKRL…SLELSLQLSQ (237 aa)) are required for interaction with AFG2B and CINP. Residues 11–25 (NQSAENGSSLPSAAS) show a composition bias toward polar residues. Position 272 is a phosphothreonine (Thr-272). Residues Ser-274 and Ser-279 each carry the phosphoserine modification. Residues 394–401 (GPPGTGKT) and 668–675 (GPPGCSKT) contribute to the ATP site. Residue Lys-859 forms a Glycyl lysine isopeptide (Lys-Gly) (interchain with G-Cter in SUMO2) linkage.

This sequence belongs to the AAA ATPase family. AFG2 subfamily. In terms of assembly, part of the 55LCC heterohexameric ATPase complex composed at least of AIRIM, AFG2A, AFG2B and CINP. Associates with pre-60S ribosomal particles.

It localises to the cytoplasm. The protein localises to the mitochondrion. The protein resides in the cytoskeleton. It is found in the spindle. The enzyme catalyses ATP + H2O = ADP + phosphate + H(+). AFG2A alone display limited ATPase activity and is not regulated by RNA or DNA binding. In the context of 55LCC heterohexameric ATPase complex, the ATPase activity increases and is stimulated by DNA binding and inhibited in presence of RNA. In terms of biological role, ATP-dependent chaperone part of the 55LCC heterohexameric ATPase complex which is chromatin-associated and promotes replisome proteostasis to maintain replication fork progression and genome stability. Required for replication fork progression, sister chromatid cohesion, and chromosome stability. The ATPase activity is specifically enhanced by replication fork DNA and is coupled to cysteine protease-dependent cleavage of replisome substrates in response to replication fork damage. Uses ATPase activity to process replisome substrates in S-phase, facilitating their proteolytic turnover from chromatin to ensure DNA replication and mitotic fidelity. Plays an essential role in the cytoplasmic maturation steps of pre-60S ribosomal particles by promoting the release of shuttling protein RSL24D1/RLP24 from the pre-ribosomal particles. May be involved in morphological and functional mitochondrial transformations during spermatogenesis. In Homo sapiens (Human), this protein is ATPase family gene 2 protein homolog A.